The following is a 411-amino-acid chain: Carbohydrate sulfotransferase 1 (411 aa).

Residues 1–2 are Cytoplasmic-facing; sequence MQ. The chain crosses the membrane as a helical; Signal-anchor for type II membrane protein span at residues 3-23; the sequence is CSWKAVLLLALASIAIQYTAI. Topologically, residues 24–411 are lumenal; that stretch reads RTFTAKSFHT…VEERDFRPFL (388 aa). An N-linked (GlcNAc...) asparagine glycan is attached at Asn-56. 69–75 contacts 3'-phosphoadenylyl sulfate; the sequence is TRSGSSF. N-linked (GlcNAc...) asparagine glycosylation is found at Asn-145 and Asn-189. 234-242 is a 3'-phosphoadenylyl sulfate binding site; sequence RDPRGILAS. An N-linked (GlcNAc...) asparagine glycan is attached at Asn-334. Residues 337-339 carry the Cell attachment site motif; the sequence is RGD.

The protein belongs to the sulfotransferase 1 family. Gal/GlcNAc/GalNAc subfamily. In terms of tissue distribution, broadly expressed with highest levels in central nervous system. Expressed in cortex (at protein level). Expressed in high endothelial venules in peripheral lymph nodes, mesenteric lymph nodes and Peyer's patches.

It is found in the golgi apparatus membrane. The enzyme catalyses 3'-phosphoadenylyl sulfate + keratan = adenosine 3',5'-bisphosphate + keratan 6'-sulfate.. It functions in the pathway glycan metabolism. Its function is as follows. Sulfotransferase that utilizes 3'-phospho-5'-adenylyl sulfate (PAPS) as sulfonate donor to catalyze the transfer of sulfate to position 6 of internal galactose (Gal) residues of keratan. Cooperates with B4GALT4 and B3GNT7 glycosyltransferases and CHST6 sulfotransferase to construct and elongate disulfated disaccharide unit [-&gt;3(6-sulfoGalbeta)1-&gt;4(6-sulfoGlcNAcbeta)1-&gt;] within keratan sulfate polymer. Has a preference for sulfating keratan sulfate, but it also transfers sulfate to the unsulfated polymer. Involved in biosynthesis of phosphacan, a major keratan sulfate proteoglycan in the developing brain. Involved in biosynthesis of 6-sulfoGalbeta-containing O-linked glycans in high endothelial venules of lymph nodes. May act in a synergistic manner with CHST4 to generate sialyl 6',6-disulfo Lewis X motif, a recognition determinant for immune cell receptors implicated in leukocyte trafficking. Catalyzes sulfation of N-acetyllactosamine (LacNAc) oligosaccharides with highest efficiency for sialylated LacNAc structures. The polypeptide is Carbohydrate sulfotransferase 1 (Chst1) (Mus musculus (Mouse)).